Consider the following 227-residue polypeptide: PKHD-type hydroxylase Neut_0373 (227 aa).

The Fe2OG dioxygenase domain occupies 78-179 (KIMPPFFNRY…RIACFMFIQS (102 aa)). Fe cation contacts are provided by His97, Asp99, and His160. Arg170 contacts 2-oxoglutarate.

The cofactor is Fe(2+). L-ascorbate serves as cofactor.

The chain is PKHD-type hydroxylase Neut_0373 from Nitrosomonas eutropha (strain DSM 101675 / C91 / Nm57).